The sequence spans 135 residues: Large ribosomal subunit protein uL16c (135 aa).

Basic residues predominate over residues 1 to 23 (MLSPKKTKFRKEHRGRMKGRSSR). Positions 1-24 (MLSPKKTKFRKEHRGRMKGRSSRG) are disordered.

Belongs to the universal ribosomal protein uL16 family. Part of the 50S ribosomal subunit.

The protein resides in the plastid. The protein localises to the chloroplast. The polypeptide is Large ribosomal subunit protein uL16c (Pelargonium hortorum (Common geranium)).